We begin with the raw amino-acid sequence, 195 residues long: PBAN-type neuropeptides (195 aa).

A signal peptide spans methionine 1–glycine 33. The propeptide occupies glutamate 34–isoleucine 63. Leucine 80 bears the Leucine amide mark. Positions alanine 86–glutamate 117 are excised as a propeptide. Residue glutamine 120 is modified to Pyrrolidone carboxylic acid. Position 128 is a leucine amide (leucine 128). A propeptide spanning residues glutamate 131–glutamine 153 is cleaved from the precursor. 2 positions are modified to leucine amide: leucine 163 and leucine 175. Residues glutamine 178–phenylalanine 195 constitute a propeptide that is removed on maturation.

It belongs to the pyrokinin family.

It is found in the secreted. Functionally, a hormone that controls sex pheromone production in females and pheromone responsiveness in male. Also mediates visceral muscle contractile activity (myotropic activity). This Apis mellifera (Honeybee) protein is PBAN-type neuropeptides.